We begin with the raw amino-acid sequence, 155 residues long: Leader peptidase HopD (155 aa).

Belongs to the peptidase A24 family.

This chain is Leader peptidase HopD (hopD), found in Salmonella typhimurium (strain LT2 / SGSC1412 / ATCC 700720).